A 248-amino-acid polypeptide reads, in one-letter code: Large ribosomal subunit protein uL4 (248 aa).

Positions 69–92 (HVPRLKNGSRAAKVPQAKGGREAH) are disordered.

Belongs to the universal ribosomal protein uL4 family. As to quaternary structure, part of the 50S ribosomal subunit.

One of the primary rRNA binding proteins, this protein initially binds near the 5'-end of the 23S rRNA. It is important during the early stages of 50S assembly. It makes multiple contacts with different domains of the 23S rRNA in the assembled 50S subunit and ribosome. Its function is as follows. Forms part of the polypeptide exit tunnel. This chain is Large ribosomal subunit protein uL4, found in Methanoregula boonei (strain DSM 21154 / JCM 14090 / 6A8).